The chain runs to 283 residues: Transmembrane protein 45B (283 aa).

7 helical membrane-spanning segments follow: residues 7 to 27 (HALPGTFFLLFGLWWSIKCPF), 55 to 75 (LIEGSLKIFFAFVGIMAEQFV), 99 to 119 (MYLFYGISGIADVLSVSSHHV), 121 to 141 (VGLDRLFLSLALFVEGFLFYF), 153 to 173 (IHSLLLFAVFGGSASTMMEVF), 187 to 207 (LAILQGTWFYQIGFVLYPLSG), and 218 to 238 (IMFITMCFCWHLAVALLIVGI). Residues 261-283 (GLRKSTSTDSSSQKALLQESDEE) are disordered. A compositionally biased stretch (polar residues) spans 264–275 (KSTSTDSSSQKA).

Belongs to the TMEM45 family.

It is found in the membrane. The sequence is that of Transmembrane protein 45B (tmem45b) from Danio rerio (Zebrafish).